We begin with the raw amino-acid sequence, 124 residues long: Probable 5-hydroxyisourate hydrolase (124 aa).

His-16, Arg-57, and Tyr-121 together coordinate substrate.

This sequence belongs to the transthyretin family. 5-hydroxyisourate hydrolase subfamily. In terms of assembly, homotetramer.

The enzyme catalyses 5-hydroxyisourate + H2O = 5-hydroxy-2-oxo-4-ureido-2,5-dihydro-1H-imidazole-5-carboxylate + H(+). In terms of biological role, catalyzes the hydrolysis of 5-hydroxyisourate (HIU) to 2-oxo-4-hydroxy-4-carboxy-5-ureidoimidazoline (OHCU). This chain is Probable 5-hydroxyisourate hydrolase, found in Schizosaccharomyces pombe (strain 972 / ATCC 24843) (Fission yeast).